A 244-amino-acid polypeptide reads, in one-letter code: Phosphoribosyl isomerase A (244 aa).

D10 (proton acceptor) is an active-site residue. D129 functions as the Proton donor in the catalytic mechanism.

The protein belongs to the HisA/HisF family.

The protein localises to the cytoplasm. It carries out the reaction 1-(5-phospho-beta-D-ribosyl)-5-[(5-phospho-beta-D-ribosylamino)methylideneamino]imidazole-4-carboxamide = 5-[(5-phospho-1-deoxy-D-ribulos-1-ylimino)methylamino]-1-(5-phospho-beta-D-ribosyl)imidazole-4-carboxamide. The catalysed reaction is N-(5-phospho-beta-D-ribosyl)anthranilate = 1-(2-carboxyphenylamino)-1-deoxy-D-ribulose 5-phosphate. Its pathway is amino-acid biosynthesis; L-histidine biosynthesis; L-histidine from 5-phospho-alpha-D-ribose 1-diphosphate: step 4/9. It functions in the pathway amino-acid biosynthesis; L-tryptophan biosynthesis; L-tryptophan from chorismate: step 3/5. Involved in both the histidine and tryptophan biosynthetic pathways. The protein is Phosphoribosyl isomerase A (priA) of Mycobacterium tuberculosis (strain CDC 1551 / Oshkosh).